Reading from the N-terminus, the 453-residue chain is G-protein coupled receptor 39 (453 aa).

The Extracellular segment spans residues Met1 to Ile34. 2 cysteine pairs are disulfide-bonded: Cys11/Cys191 and Cys108/Cys210. Residues His17 and His19 each coordinate Zn(2+). The chain crosses the membrane as a helical span at residues Leu35 to Thr55. Residues Gln56–Thr69 lie on the Cytoplasmic side of the membrane. The helical transmembrane segment at Asp70–Met89 threads the bilayer. Residues Glu90–Lys109 are Extracellular-facing. Residues Leu110–Phe131 traverse the membrane as a helical segment. At Glu132–Gln151 the chain is on the cytoplasmic side. A helical membrane pass occupies residues Val152–Phe172. Topologically, residues Ala173–Trp217 are extracellular. Asn192, Asn206, and Asn212 each carry an N-linked (GlcNAc...) asparagine glycan. The helical transmembrane segment at Thr218–Cys242 threads the bilayer. The Cytoplasmic segment spans residues Trp243–Ile283. The tract at residues Gly255–Ser274 is disordered. The helical transmembrane segment at Phe284–Met305 threads the bilayer. The Extracellular segment spans residues Ala306–Met323. Residues Ile324–Tyr344 traverse the membrane as a helical segment. The Cytoplasmic portion of the chain corresponds to Thr345–Val453. Ser396 is subject to Phosphoserine. The disordered stretch occupies residues Ser415–Val453. Low complexity predominate over residues Glu418–Ser435.

The protein belongs to the G-protein coupled receptor 1 family. In terms of assembly, interacts with HTR1A. Interacts with GALR1. In terms of tissue distribution, expressed in many tissues, including the stomach, intestine and hypothalamus.

It localises to the cell membrane. Zinc-sensing receptor that can sense changes in extracellular Zn(2+), mediate Zn(2+) signal transmission, and participates in the regulation of numerous physiological processes including glucose homeostasis regulation, gastrointestinal mobility, hormone secretion and cell death. Activation by Zn(2+) in keratinocytes increases the intracellular concentration of Ca(2+) and activates the ERK/MAPK and PI3K/AKT signaling pathways leading to epithelial repair. Plays an essential role in normal wound healing by inducing the production of cytokines including the major inflammatory cytokine IL6 via the PKC/MAPK/CEBPB pathway. Regulates adipose tissue metabolism, especially lipolysis, and regulates the function of lipases, such as hormone-sensitive lipase and adipose triglyceride lipase. Plays a role in the inhibition of cell death and protects against oxidative, endoplasmic reticulum and mitochondrial stress by inducing secretion of the cytoprotective pigment epithelium-derived growth factor (PEDF) and probably other protective transcripts in a GNA13/RHOA/SRE-dependent manner. Forms dynamic heteroreceptor complexes with HTR1A and GALR1 depending on cell type or specific physiological states, resulting in signaling diversity: HTR1A-GPR39 shows additive increase in signaling along the serum response element (SRE) and NF-kappa-B pathways while GALR1 acts as an antagonist blocking SRE. The polypeptide is G-protein coupled receptor 39 (GPR39) (Homo sapiens (Human)).